The primary structure comprises 391 residues: Polysialic acid biosynthesis protein P7 (391 aa).

May be involved in the synthesis of polysialic acid (PSA). In Escherichia coli, this protein is Polysialic acid biosynthesis protein P7 (neuC).